The following is a 175-amino-acid chain: Interleukin-10 (175 aa).

The signal sequence occupies residues 1–21 (MQTCCQALLLLLAACTLPAHC). 2 disulfide bridges follow: Cys26–Cys123 and Cys77–Cys129.

Belongs to the IL-10 family. As to quaternary structure, homodimer. Interacts with IL10RA and IL10RB. As to expression, expressed predominantly in bursa of Fabricius and cecal tonsils with low levels in thymus, liver and lung.

Its subcellular location is the secreted. In terms of biological role, major immune regulatory cytokine that acts on many cells of the immune system where it has profound anti-inflammatory functions, limiting excessive tissue disruption caused by inflammation. Mechanistically, IL10 binds to its heterotetrameric receptor comprising IL10RA and IL10RB leading to JAK1 and STAT2-mediated phosphorylation of STAT3. In turn, STAT3 translocates to the nucleus where it drives expression of anti-inflammatory mediators. Targets antigen-presenting cells (APCs) such as macrophages and monocytes and inhibits their release of pro-inflammatory cytokines including granulocyte-macrophage colony-stimulating factor /GM-CSF, granulocyte colony-stimulating factor/G-CSF, IL-1 alpha, IL-1 beta, IL-6, IL-8 and TNF-alpha. Also interferes with antigen presentation by reducing the expression of MHC-class II and co-stimulatory molecules, thereby inhibiting their ability to induce T cell activation. In addition, controls the inflammatory response of macrophages by reprogramming essential metabolic pathways including mTOR signaling. The protein is Interleukin-10 of Gallus gallus (Chicken).